A 44-amino-acid chain; its full sequence is Conotoxin Cl9a (44 aa).

A 4-carboxyglutamate mark is found at glutamate 7, glutamate 8, and glutamate 24. Cystine bridges form between cysteine 9–cysteine 33, cysteine 15–cysteine 40, and cysteine 23–cysteine 42.

In terms of tissue distribution, expressed by the venom duct.

It is found in the secreted. In Californiconus californicus (California cone), this protein is Conotoxin Cl9a.